Consider the following 76-residue polypeptide: Acyl carrier protein (76 aa).

Positions 1–74 (MFDKLKEIIA…DVVEYITEHT (74 aa)) constitute a Carrier domain. Serine 34 carries the O-(pantetheine 4'-phosphoryl)serine modification.

Belongs to the acyl carrier protein (ACP) family. 4'-phosphopantetheine is transferred from CoA to a specific serine of apo-ACP by AcpS. This modification is essential for activity because fatty acids are bound in thioester linkage to the sulfhydryl of the prosthetic group.

It localises to the cytoplasm. The protein operates within lipid metabolism; fatty acid biosynthesis. Its function is as follows. Carrier of the growing fatty acid chain in fatty acid biosynthesis. This is Acyl carrier protein from Clostridium perfringens (strain ATCC 13124 / DSM 756 / JCM 1290 / NCIMB 6125 / NCTC 8237 / Type A).